The chain runs to 149 residues: 3-dehydroquinate dehydratase (149 aa).

Residue Tyr-26 is the Proton acceptor of the active site. 3 residues coordinate substrate: Asn-77, His-83, and Asp-90. The active-site Proton donor is His-103. Residues 104–105 and Arg-114 each bind substrate; that span reads LS.

This sequence belongs to the type-II 3-dehydroquinase family. As to quaternary structure, homododecamer.

It catalyses the reaction 3-dehydroquinate = 3-dehydroshikimate + H2O. It functions in the pathway metabolic intermediate biosynthesis; chorismate biosynthesis; chorismate from D-erythrose 4-phosphate and phosphoenolpyruvate: step 3/7. In terms of biological role, catalyzes a trans-dehydration via an enolate intermediate. This is 3-dehydroquinate dehydratase from Aliivibrio salmonicida (strain LFI1238) (Vibrio salmonicida (strain LFI1238)).